The sequence spans 364 residues: MAVAGAVKTSGGVQFCSEFENDDSDFRRVVLLYVDGPFGVGKTVTAKTLMQMPNWRGCRLYLAEPMQAWRQWFGGADMIKEINEIQTLKASGKLECREASPVAVAEVQMTIAAPLRIMNHVIYNYLGSERCYSAAASGPDDVLFLVDRHPLAACLCFPVAQYLSGALEFGDLITLLSGIPDIPTHSNIVLMDLDICEQARRIIQRGRPGETVDWTYLCALRNSYICLMNTTTYLQRTSYPALLKEQEALTSATLLKFKRECLETATVPEINPSIDQTLFAILAFDQQNVHGERLKTVLSFVVQKLATVLKNLCIFYLPAHGLTPEACALKCLEFAETASSLTTKRAAIASLIDAVERYNADMGS.

36–43 (GPFGVGKT) is a binding site for ATP. The active-site Proton acceptor is the Glu64. Gln108 is a substrate binding site. Position 201 (Arg201) interacts with ATP. Residue Arg207 participates in substrate binding.

This sequence belongs to the herpesviridae thymidine kinase family. Homodimer.

The catalysed reaction is thymidine + ATP = dTMP + ADP + H(+). Functionally, catalyzes the transfer of the gamma-phospho group of ATP to thymidine to generate dTMP in the salvage pathway of pyrimidine synthesis. The dTMP serves as a substrate for DNA polymerase during viral DNA replication. Allows the virus to be reactivated and to grow in non-proliferative cells lacking a high concentration of phosphorylated nucleic acid precursors. This chain is Thymidine kinase, found in Infectious laryngotracheitis virus (strain Thorne V882) (ILTV).